Reading from the N-terminus, the 524-residue chain is Cytochrome P450 monooxygenase ATR4 (524 aa).

The chain crosses the membrane as a helical span at residues 13-36; sequence IITYLDSLTWVGMALPLFSLCWAI. N291, N444, and N454 each carry an N-linked (GlcNAc...) asparagine glycan.

The protein belongs to the cytochrome P450 family. Heme serves as cofactor.

It localises to the membrane. It functions in the pathway mycotoxin biosynthesis. In terms of biological role, cytochrome P450 monooxygenase; part of the core atranone cluster (CAC) which products are predicted to catalyze most or all steps of mycotoxin atranone synthesis, starting from geranylgeranyl pyrophosphate (GGPP). The initial cyclization of GGPP to dolabellane is probably performed by the terpene cyclase ATR13. The Baeyer-Villiger oxidation near the end of the atranone synthesis, which converts atranones D and E to atranones F and G is predicted to be catalyzed by the monooxygenase ATR8. Of the CAC's other predicted gene products, the reducing PKS ATR6 might synthesize a polyketide chain. This polyketide is probably transferred onto the atranone backbone by the polyketide transferase ATR5. Other predicted CAC products include 4 oxygenases (ATR2, ATR3, ATR4, and ATR14), 3 short-chain reductases (ATR7, ATR9, and ATR10), and a methyltransferase (ATR12). These may all be involved in the various steps of atranone biosynthesis, although their specific roles must await experimental determination. In Stachybotrys chlorohalonatus (strain IBT 40285), this protein is Cytochrome P450 monooxygenase ATR4.